A 496-amino-acid chain; its full sequence is Guanosine-5'-triphosphate,3'-diphosphate pyrophosphatase (496 aa).

This sequence belongs to the GppA/Ppx family. GppA subfamily.

It catalyses the reaction guanosine 3'-diphosphate 5'-triphosphate + H2O = guanosine 3',5'-bis(diphosphate) + phosphate + H(+). It participates in purine metabolism; ppGpp biosynthesis; ppGpp from GTP: step 2/2. Catalyzes the conversion of pppGpp to ppGpp. Guanosine pentaphosphate (pppGpp) is a cytoplasmic signaling molecule which together with ppGpp controls the 'stringent response', an adaptive process that allows bacteria to respond to amino acid starvation, resulting in the coordinated regulation of numerous cellular activities. This chain is Guanosine-5'-triphosphate,3'-diphosphate pyrophosphatase, found in Aeromonas salmonicida (strain A449).